A 182-amino-acid chain; its full sequence is Lipid A acyltransferase PagP (182 aa).

An N-terminal signal peptide occupies residues 1-21; it reads MTQYFRALAFFLLLVPATAMA. Cys22 is lipidated: N-palmitoyl cysteine. Cys22 carries S-diacylglycerol cysteine lipidation. Catalysis depends on residues His55, Asp98, and Ser99.

The protein belongs to the lipid A palmitoyltransferase family. In terms of assembly, homodimer.

The protein localises to the cell outer membrane. It catalyses the reaction a lipid A + a 1,2-diacyl-sn-glycero-3-phosphocholine = a hepta-acyl lipid A + a 2-acyl-sn-glycero-3-phosphocholine. The catalysed reaction is a lipid IVA + a 1,2-diacyl-sn-glycero-3-phosphocholine = a lipid IVB + a 2-acyl-sn-glycero-3-phosphocholine. It carries out the reaction a lipid IIA + a 1,2-diacyl-sn-glycero-3-phosphocholine = a lipid IIB + a 2-acyl-sn-glycero-3-phosphocholine. In terms of biological role, transfers a fatty acid residue from the sn-1 position of a phospholipid to the N-linked hydroxyfatty acid chain on the proximal unit of lipid A or its precursors. In Bordetella parapertussis (strain 12822 / ATCC BAA-587 / NCTC 13253), this protein is Lipid A acyltransferase PagP.